The sequence spans 308 residues: GTPase Era (308 aa).

In terms of domain architecture, Era-type G spans 14 to 181; it reads RCGFVALIGA…KQALAAMVPP (168 aa). The segment at 22 to 29 is G1; sequence GAPNVGKS. 22–29 lines the GTP pocket; that stretch reads GAPNVGKS. Residues 48–52 are G2; it reads QTTRA. Residues 69–72 are G3; the sequence is DTPG. GTP contacts are provided by residues 69 to 73 and 131 to 134; these read DTPGI and NKVD. The tract at residues 131 to 134 is G4; sequence NKVD. Residues 160-162 form a G5 region; the sequence is ISA. The KH type-2 domain maps to 212 to 289; the sequence is LHQELPYQST…HLFLFVKVRE (78 aa).

It belongs to the TRAFAC class TrmE-Era-EngA-EngB-Septin-like GTPase superfamily. Era GTPase family. As to quaternary structure, monomer.

Its subcellular location is the cytoplasm. It is found in the cell inner membrane. Functionally, an essential GTPase that binds both GDP and GTP, with rapid nucleotide exchange. Plays a role in 16S rRNA processing and 30S ribosomal subunit biogenesis and possibly also in cell cycle regulation and energy metabolism. This chain is GTPase Era, found in Bradyrhizobium sp. (strain BTAi1 / ATCC BAA-1182).